Reading from the N-terminus, the 512-residue chain is Protein SHC1 (512 aa).

The span at 101-113 shows a compositional bias: acidic residues; that stretch reads EQDEFENDVEDDA. 2 disordered regions span residues 101–122 and 144–165; these read EQDE…EKSQ and DGNS…SVAL. 4 Sel1-like repeats span residues 318-353, 354-389, 390-429, and 433-470; these read PDAQ…KRLH, IESV…TKNH, PAAM…SMAS, and CGAP…ALGH.

Belongs to the SKT5 family.

It is found in the cytoplasm. The protein localises to the cytoplasmic granule membrane. Its function is as follows. Required for the activation of chitin synthase III (CHS3) activity during the sporulation process. The chain is Protein SHC1 (SHC1) from Saccharomyces cerevisiae (strain YJM789) (Baker's yeast).